A 279-amino-acid polypeptide reads, in one-letter code: Putative hydro-lyase GDI0188/Gdia_2258 (279 aa).

It belongs to the D-glutamate cyclase family.

The sequence is that of Putative hydro-lyase GDI0188/Gdia_2258 from Gluconacetobacter diazotrophicus (strain ATCC 49037 / DSM 5601 / CCUG 37298 / CIP 103539 / LMG 7603 / PAl5).